The following is a 115-amino-acid chain: Large ribosomal subunit protein bL20 (115 aa).

The protein belongs to the bacterial ribosomal protein bL20 family.

Functionally, binds directly to 23S ribosomal RNA and is necessary for the in vitro assembly process of the 50S ribosomal subunit. It is not involved in the protein synthesizing functions of that subunit. This is Large ribosomal subunit protein bL20 from Borrelia hermsii (strain HS1 / DAH).